The sequence spans 575 residues: Serine/threonine-protein kinase Pink1, mitochondrial (575 aa).

The transit peptide at 1 to 51 (MSLLAYTNLLLQNGRIFRYYKKANIKKFIKKIIKLDLKSTPSEASVSRQTF) directs the protein to the mitochondrion. Over 52 to 94 (LSTGLNSVKNAVQLQARKLLINNVLERVTPTLNSDLKKKAAKR) the chain is Mitochondrial intermembrane. Residues 95-118 (LFYGDSAPFFALVGVSLASGSGLL) traverse the membrane as a helical segment. Topologically, residues 119 to 575 (TKDDELEGIC…KWIQELHIYN (457 aa)) are cytoplasmic. Lysine 193 contributes to the ATP binding site. Serine 202 and serine 204 each carry phosphoserine; by autocatalysis. Residue glutamate 214 coordinates Mg(2+). Residue threonine 305 is modified to Phosphothreonine; by autocatalysis. Aspartate 334 functions as the Proton acceptor in the catalytic mechanism. Mg(2+) is bound by residues asparagine 339 and aspartate 357.

It belongs to the protein kinase superfamily. Ser/Thr protein kinase family. It depends on Mg(2+) as a cofactor. Proteolytically cleaved. In healthy cells, the precursor is continuously imported into mitochondria where it is proteolytically cleaved into its short form by the mitochondrial rhomboid protease rho-7 (8231301). The short form is then released into the cytosol where it rapidly undergoes proteasome-dependent degradation. In unhealthy cells, when cellular stress conditions lead to the loss of mitochondrial membrane potential, mitochondrial import is impaired leading to the precursor accumulating on the outer mitochondrial membrane (OMM). In terms of processing, autophosphorylated. Autophosphorylated on Ser-202, which activates kinase activity. Loss of mitochondrial membrane potential results in the precursor accumulating on the outer mitochondrial membrane (OMM) where it is activated by autophosphorylation at Ser-202. Autophosphorylation is sufficient and essential for selective recruitment of park to depolarized mitochondria, likely via Pink1-dependent phosphorylation of polyubiquitin chains. Also autophosphorylated at Ser-204 and Thr-305.

The protein localises to the mitochondrion outer membrane. Its subcellular location is the mitochondrion inner membrane. It is found in the cytoplasm. The protein resides in the cytosol. The enzyme catalyses L-seryl-[protein] + ATP = O-phospho-L-seryl-[protein] + ADP + H(+). It catalyses the reaction L-threonyl-[protein] + ATP = O-phospho-L-threonyl-[protein] + ADP + H(+). Functionally, acts as a serine/threonine-protein kinase. Exhibits a substrate preference for proline at position P+1 and a general preference at several residues for basic residues such as arginine. Also exhibits moderate preferences for a phosphotyrosine at position P-3 and a tryptophan at P-5. Critical to mitochondrial homeostasis it mediates several pathways that maintain mitochondrial health and function Protects against mitochondrial dysfunction during cellular stress by phosphorylating mitochondrial proteins such as park and likely Drp1, to coordinate mitochondrial quality control mechanisms that remove and replace dysfunctional mitochondrial components. Depending on the severity of mitochondrial damage and/or dysfunction, activity ranges from preventing apoptosis and stimulating mitochondrial biogenesis to regulating mitochondrial dynamics and eliminating severely damaged mitochondria via mitophagy. Appears to be particularly important in maintaining the physiology and function of cells with high energy demands that are undergoing stress or altered metabolic environment, including spermatids, muscle cells and neurons such as the dopaminergic (DA) neurons. Mediates the translocation and activation of park at the outer membrane (OMM) of dysfunctional/depolarized mitochondria. At the OMM of damaged mitochondria, phosphorylates pre-existing polyubiquitin chains, the Pink1-phosphorylated polyubiquitin then recruits park from the cytosol to the OMM where park is fully activated by phosphorylation at 'Ser-94' by Pink1. When cellular stress results in irreversible mitochondrial damage, functions with park to promote the clearance of dysfunctional and/or depolarized mitochondria by selective autophagy (mitophagy). The Pink1-park pathway also promotes fission and/or inhibits fusion of damaged mitochondria, by phosphorylating and thus promoting the park-dependent degradation of proteins involved in mitochondrial fusion/fission such as Marf, Opa1 and fzo. This prevents the refusion of unhealthy mitochondria with the mitochondrial network or initiates mitochondrial fragmentation facilitating their later engulfment by autophagosomes. Also likely to promote mitochondrial fission independently of park and Atg7-mediated mitophagy, via the phosphorylation and activation of Drp1. Regulates motility of damaged mitochondria by phosphorylating Miro which likely promotes its park-dependent degradation by the proteasome; in motor neurons, this inhibits mitochondrial intracellular anterograde transport along the axons which probably increases the chance of the mitochondria being eliminated in the soma. The Pink1-park pathway is also involved in mitochondrial regeneration processes such as promoting mitochondrial biogenesis, activating localized mitochondrial repair, promoting selective turnover of mitochondrial proteins and initiating the mitochondrial import of endogenous proteins. Involved in mitochondrial biogenesis by promoting the park-dependent ubiquitination of transcriptional repressor Paris which leads to its subsequent proteasomal degradation and allows activation of the transcription factor srl. Functions with park to promote localized mitochondrial repair by activating the translation of specific nuclear-encoded mitochondrial RNAs (nc-mtRNAs) on the mitochondrial surface, including several key electron transport chain component nc-mtRNAs. During oogenesis, phosphorylates and inactivates larp on the membrane of defective mitochondria, thus impairing local translation and mtDNA replication and consequently, reducing transmission of deleterious mtDNA mutations to the mature oocyte. Phosphorylates the mitochondrial acyl-CoA dehydrogenase Mcad, and appears to be important for maintaining fatty acid and amino acid metabolism via a mechanism that is independent of it's role in maintaining production of ATP. This is Serine/threonine-protein kinase Pink1, mitochondrial from Pediculus humanus subsp. corporis (Body louse).